The chain runs to 132 residues: Nucleoid-associated protein EspR (132 aa).

A DNA-binding region (H-T-H motif) is located at residues 38 to 50; it reads ITMSAPYLSQLRS.

As to quaternary structure, homodimer. Binds DNA as a dimer of dimers.

Its subcellular location is the cytoplasm. The protein localises to the nucleoid. Virulence regulator that has both architectural and regulatory roles. Impacts cell wall functions and pathogenesis through regulation of multiple genes. This Mycobacterium tuberculosis (strain CDC 1551 / Oshkosh) protein is Nucleoid-associated protein EspR.